The primary structure comprises 427 residues: Glucose-6-phosphate isomerase (427 aa).

Residue Glu-277 is the Proton donor of the active site. Active-site residues include His-298 and Lys-414.

Belongs to the GPI family.

The protein resides in the cytoplasm. The catalysed reaction is alpha-D-glucose 6-phosphate = beta-D-fructose 6-phosphate. It functions in the pathway carbohydrate biosynthesis; gluconeogenesis. Its pathway is carbohydrate degradation; glycolysis; D-glyceraldehyde 3-phosphate and glycerone phosphate from D-glucose: step 2/4. Functionally, catalyzes the reversible isomerization of glucose-6-phosphate to fructose-6-phosphate. The sequence is that of Glucose-6-phosphate isomerase from Mycoplasma mycoides subsp. mycoides SC (strain CCUG 32753 / NCTC 10114 / PG1).